We begin with the raw amino-acid sequence, 192 residues long: uncharacterized protein (192 aa).

This sequence to M.thermoautotrophicum MTH863.

This is an uncharacterized protein from Methanocaldococcus jannaschii (strain ATCC 43067 / DSM 2661 / JAL-1 / JCM 10045 / NBRC 100440) (Methanococcus jannaschii).